The primary structure comprises 533 residues: Tyrosine decarboxylase (533 aa).

A disordered region spans residues 1–22 (MAPPSHCHTINGGAPRNGAIPE). Residues Thr281 and Asn336 each contribute to the pyridoxal 5'-phosphate site. Residue Lys339 is modified to N6-(pyridoxal phosphate)lysine.

This sequence belongs to the group II decarboxylase family. The cofactor is pyridoxal 5'-phosphate.

The catalysed reaction is L-tyrosine + H(+) = tyramine + CO2. Catalyzes the decarboxylation of L-tyrosine to tyramine, which can be converted to the hydroxycinnamic acid amides feruloyltyramine and 4-coumaroyltyramine. Possesses low tryptophan decarboxylase activity. The sequence is that of Tyrosine decarboxylase from Oryza sativa subsp. japonica (Rice).